A 229-amino-acid polypeptide reads, in one-letter code: Potassium/proton antiporter CemA (229 aa).

A run of 4 helical transmembrane segments spans residues 7 to 27, 114 to 134, 154 to 174, and 189 to 209; these read FTPL…SLSF, IICF…LVIL, ILLV…ELMI, and IISG…KYWI.

Belongs to the CemA family.

Its subcellular location is the plastid. The protein localises to the chloroplast inner membrane. It carries out the reaction K(+)(in) + H(+)(out) = K(+)(out) + H(+)(in). Functionally, contributes to K(+)/H(+) antiport activity by supporting proton efflux to control proton extrusion and homeostasis in chloroplasts in a light-dependent manner to modulate photosynthesis. Prevents excessive induction of non-photochemical quenching (NPQ) under continuous-light conditions. Indirectly promotes efficient inorganic carbon uptake into chloroplasts. This chain is Potassium/proton antiporter CemA, found in Acorus calamus var. americanus (American sweet flag).